Reading from the N-terminus, the 1042-residue chain is Sarcoplasmic/endoplasmic reticulum calcium ATPase 2 (1042 aa).

Residues 1 to 48 (MENAHTKTVEEVLGHFGVNESTGLSLEQVKKLKERWGSNELPAEEGKT) lie on the Cytoplasmic side of the membrane. At Ser-38 the chain carries Phosphoserine. A helical membrane pass occupies residues 49-69 (LLELVIEQFEDLLVRILLLAA). At 70–89 (CISFVLAWFEEGEETITAFV) the chain is on the lumenal side. Residues 90-110 (EPFVILLILVANAIVGVWQER) form a helical membrane-spanning segment. The Cytoplasmic portion of the chain corresponds to 111–253 (NAENAIEALK…QERTPLQQKL (143 aa)). Residues 254–273 (DEFGEQLSKVISLICIAVWI) traverse the membrane as a helical segment. The Lumenal segment spans residues 274–295 (INIGHFNDPVHGGSWIRGAIYY). Tyr-294 and Tyr-295 each carry 3'-nitrotyrosine. A helical membrane pass occupies residues 296 to 313 (FKIAVALAVAAIPEGLPA). 4 residues coordinate Ca(2+): Val-304, Ala-305, Ile-307, and Glu-309. Over 314–756 (VITTCLALGT…EEGRAIYNNM (443 aa)) the chain is Cytoplasmic. Asp-351 serves as the catalytic 4-aspartylphosphate intermediate. 2 residues coordinate Mg(2+): Asp-351 and Thr-353. Thr-353 serves as a coordination point for ATP. Position 441 is a phosphothreonine (Thr-441). Glu-442, Arg-489, and Lys-514 together coordinate ATP. At Ser-531 the chain carries Phosphoserine. Position 559 (Arg-559) interacts with ATP. The tract at residues 575–594 (MNLEDSANFIKYETNLTFVG) is interaction with HAX1. Position 580 is a phosphoserine (Ser-580). 3 residues coordinate ATP: Thr-624, Gly-625, and Asp-626. The residue at position 663 (Ser-663) is a Phosphoserine. Positions 677 and 683 each coordinate ATP. Mg(2+) is bound at residue Asp-702. Residue Asn-705 coordinates ATP. A helical membrane pass occupies residues 757–776 (KQFIRYLISSNVGEVVCIFL). Ca(2+)-binding residues include Asn-767 and Glu-770. At 777–786 (TAALGFPEAL) the chain is on the lumenal side. The chain crosses the membrane as a helical span at residues 787–807 (IPVQLLWVNLVTDGLPATALG). Residues 787–807 (IPVQLLWVNLVTDGLPATALG) are interaction with PLN. The segment at 788–1042 (PVQLLWVNLV…DTNFSDMFWS (255 aa)) is interaction with TMEM64 and PDIA3. Ca(2+) is bound by residues Asn-795, Thr-798, and Asp-799. Topologically, residues 808–827 (FNPPDLDIMNKPPRNPKEPL) are cytoplasmic. The chain crosses the membrane as a helical span at residues 828 to 850 (ISGWLFFRYLAIGCYVGAATVGA). Residues 851 to 896 (AAWWFIAADGGPRVTFYQLSHFLQCKEDNPDFEGVDCAVFESPYPM) are Lumenal-facing. A disulfide bridge links Cys-875 with Cys-887. A helical transmembrane segment spans residues 897–916 (TMALSVLVTIEMCNALNSLS). Residue Glu-907 coordinates Ca(2+). Residues 917-929 (ENQSLLRMPPWEN) lie on the Cytoplasmic side of the membrane. Residues 930 to 948 (IWLVGSICLSMSLHFLILY) form a helical membrane-spanning segment. Positions 931–942 (WLVGSICLSMSL) are interaction with PLN. Topologically, residues 949 to 963 (VEPLPLIFQITPLNL) are lumenal. The chain crosses the membrane as a helical span at residues 964–984 (TQWLMVLKISLPVILMDETLK). Residues 985-1042 (FVARNYLEPGKECVQPATKSCSFSACTDGISWPFVLLIMPLVIWVYSTDTNFSDMFWS) lie on the Cytoplasmic side of the membrane.

Belongs to the cation transport ATPase (P-type) (TC 3.A.3) family. Type IIA subfamily. As to quaternary structure, interacts with sarcolipin (SLN); the interaction inhibits ATP2A2 Ca(2+) affinity. Interacts with phospholamban (PLN); the interaction inhibits ATP2A2 Ca(2+) affinity. Interacts with myoregulin (MRLN). Interacts with ARLN and ERLN; the interactions inhibit ATP2A2 Ca(2+) affinity. Interacts with STRIT1/DWORF; the interaction results in activation of ATP2A2. Interacts with the monomeric forms of SLN, PLN, ARLN, ERLN and STRI1/DWORF. Interacts with HAX1. Interacts with S100A8 and S100A9. Interacts with SLC35G1 and STIM1. Interacts with TMEM203. Interacts with TMEM64 and PDIA3. Interacts with TMX1. Interacts with TMX2. Interacts with VMP1; VMP1 competes with PLN and SLN to prevent them from forming an inhibitory complex with ATP2A2. Interacts with ULK1. Interacts with S100A1 in a Ca(2+)-dependent manner. Interacts with TUNAR. Interacts with FLVCR2; this interaction occurs in the absence of heme and promotes ATP2A2 proteasomal degradation; this complex is dissociated upon heme binding. Interacts with FNIP1. In terms of assembly, interacts with TRAM2 (via C-terminus). It depends on Mg(2+) as a cofactor. Post-translationally, nitrated under oxidative stress. Nitration on the two tyrosine residues inhibits catalytic activity. Serotonylated on Gln residues by TGM2 in response to hypoxia, leading to its inactivation. Detected in heart left ventricle (at protein level). Isoform 2 is highly expressed in heart and slow twitch skeletal muscle. Isoform 1 is widely expressed.

The protein resides in the endoplasmic reticulum membrane. It localises to the sarcoplasmic reticulum membrane. The enzyme catalyses Ca(2+)(in) + ATP + H2O = Ca(2+)(out) + ADP + phosphate + H(+). Has different conformational states with differential Ca2+ affinity. The E1 conformational state (active form) shows high Ca(2+) affinity, while the E2 state exhibits low Ca(2+) affinity. Binding of ATP allosterically increases its affinity for subsequent binding of Ca2+. Reversibly inhibited by phospholamban (PLN) at low calcium concentrations. PLN inhibits ATP2A2 Ca(2+) affinity by disrupting its allosteric activation by ATP. Inhibited by sarcolipin (SLN) and myoregulin (MRLN). The inhibition is blocked by VMP1. Enhanced by STRIT1/DWORF; STRIT1 increases activity by displacing sarcolipin (SLN), phospholamban (PLN) and myoregulin (MRLN). Stabilizes SERCA2 in its E2 state. Functionally, this magnesium-dependent enzyme catalyzes the hydrolysis of ATP coupled with the translocation of calcium from the cytosol to the sarcoplasmic reticulum lumen. Involved in autophagy in response to starvation. Upon interaction with VMP1 and activation, controls ER-isolation membrane contacts for autophagosome formation. Also modulates ER contacts with lipid droplets, mitochondria and endosomes. In coordination with FLVCR2 mediates heme-stimulated switching from mitochondrial ATP synthesis to thermogenesis. Involved in the regulation of the contraction/relaxation cycle. Acts as a regulator of TNFSF11-mediated Ca(2+) signaling pathways via its interaction with TMEM64 which is critical for the TNFSF11-induced CREB1 activation and mitochondrial ROS generation necessary for proper osteoclast generation. Association between TMEM64 and SERCA2 in the ER leads to cytosolic Ca(2+) spiking for activation of NFATC1 and production of mitochondrial ROS, thereby triggering Ca(2+) signaling cascades that promote osteoclast differentiation and activation. This is Sarcoplasmic/endoplasmic reticulum calcium ATPase 2 (ATP2A2) from Sus scrofa (Pig).